Reading from the N-terminus, the 244-residue chain is Ribonuclease 3 (244 aa).

The region spanning 21–148 (DHAPLLEAWG…MLGAIYLHHG (128 aa)) is the RNase III domain. Glu61 lines the Mg(2+) pocket. Asp65 is a catalytic residue. 2 residues coordinate Mg(2+): Asp134 and Glu137. Glu137 is a catalytic residue. The DRBM domain occupies 175 to 242 (DWKTVLLEKL…AKQAVQKLNE (68 aa)).

The protein belongs to the ribonuclease III family. Homodimer. Requires Mg(2+) as cofactor.

The protein localises to the cytoplasm. The catalysed reaction is Endonucleolytic cleavage to 5'-phosphomonoester.. In terms of biological role, digests double-stranded RNA. Involved in the processing of primary rRNA transcript to yield the immediate precursors to the large and small rRNAs (23S and 16S). Processes some mRNAs, and tRNAs when they are encoded in the rRNA operon. Processes pre-crRNA and tracrRNA of type II CRISPR loci if present in the organism. This is Ribonuclease 3 from Corynebacterium jeikeium (strain K411).